The primary structure comprises 110 residues: Protein RnfH (110 aa).

Residues 86–110 (RQRRVEKSRQEGSVEGRKWLPKDSR) form a disordered region. The span at 88–110 (RRVEKSRQEGSVEGRKWLPKDSR) shows a compositional bias: basic and acidic residues.

Belongs to the UPF0125 (RnfH) family.

The chain is Protein RnfH from Paraburkholderia phymatum (strain DSM 17167 / CIP 108236 / LMG 21445 / STM815) (Burkholderia phymatum).